Consider the following 76-residue polypeptide: Protein CsbA (76 aa).

Residues 1-5 lie on the Extracellular side of the membrane; it reads MITKA. Residues 6–22 traverse the membrane as a helical segment; it reads VFALFFPFMLVVLFTRV. The Cytoplasmic portion of the chain corresponds to 23–27; it reads TFNHY. The chain crosses the membrane as a helical span at residues 28 to 44; that stretch reads VAIALTAALLFASYLKG. Residues 45–49 lie on the Extracellular side of the membrane; it reads YTETY. Residues 50–66 form a helical membrane-spanning segment; sequence FIVGLDVVSLVAGGLYM. The Cytoplasmic portion of the chain corresponds to 67 to 76; the sequence is AKKAAEKKEE.

It localises to the cell membrane. The polypeptide is Protein CsbA (csbA) (Bacillus subtilis (strain 168)).